The primary structure comprises 365 residues: DNA replication and repair protein RecF (365 aa).

Residue 30-37 coordinates ATP; it reads GRNAQGKT.

This sequence belongs to the RecF family.

The protein localises to the cytoplasm. The RecF protein is involved in DNA metabolism; it is required for DNA replication and normal SOS inducibility. RecF binds preferentially to single-stranded, linear DNA. It also seems to bind ATP. The chain is DNA replication and repair protein RecF from Streptococcus pneumoniae (strain 70585).